The following is a 137-amino-acid chain: Glycine cleavage system H protein (137 aa).

The region spanning 36-118 (PAIIGITEYA…YGEGWLLKVE (83 aa)) is the Lipoyl-binding domain. Residue Lys-77 is modified to N6-lipoyllysine.

The protein belongs to the GcvH family. As to quaternary structure, the glycine cleavage system is composed of four proteins: P, T, L and H. The cofactor is (R)-lipoate.

In terms of biological role, the glycine cleavage system catalyzes the degradation of glycine. The H protein shuttles the methylamine group of glycine from the P protein to the T protein. The polypeptide is Glycine cleavage system H protein (Bifidobacterium longum (strain NCC 2705)).